Reading from the N-terminus, the 149-residue chain is Large ribosomal subunit protein bL9 (149 aa).

This sequence belongs to the bacterial ribosomal protein bL9 family.

Its function is as follows. Binds to the 23S rRNA. In Haemophilus influenzae (strain PittGG), this protein is Large ribosomal subunit protein bL9.